The sequence spans 269 residues: Bis(5'-nucleosyl)-tetraphosphatase, symmetrical (269 aa).

The protein belongs to the Ap4A hydrolase family.

It catalyses the reaction P(1),P(4)-bis(5'-adenosyl) tetraphosphate + H2O = 2 ADP + 2 H(+). Functionally, hydrolyzes diadenosine 5',5'''-P1,P4-tetraphosphate to yield ADP. The chain is Bis(5'-nucleosyl)-tetraphosphatase, symmetrical from Vibrio cholerae serotype O1 (strain ATCC 39541 / Classical Ogawa 395 / O395).